The following is a 545-amino-acid chain: MELKNIVNSYNITNILGYLRRSRQDMEREKRTGEDTLTEQKELMNKILTAIEIPYELKMEIGSGESIDGRPVFKECLKDLEEGKYQAIAVKEITRLSRGSYSDAGQIVNLLQSKRLIIITPYKVYDPRNPVDMRQIRFELFMAREEFEMTRERMTGAKYTYAAQGKWISGLAPYGYQLNKKTSKLDPVEDEAKVVQLIFNIFLNGLNGKDYSYTAIASHLTNLQIPTPSGKKRWNQYTIKAILQNEVYIGTVKYKVREKTKDGKRTIRPEKEQIVVQDAHAPIIDKEQFQQSQVKIANKVPLLPNKDEFELSELAGVCTCSKCGEPLSKYESKRIRKNKDGTESVYHVKSLTCKKNKCTYVRYNDVENAILDYLSSLNDLNDSTLTKHINSMLSKYEDDNSNMKTKKQMSEHLSQKEKELKNKENFIFDKYESGIYSDELFLKRKAALDEEFKELQNAKNELNGLQDTQSEIDSNTVRNNINKIIDQYHIESSSEKKNELLRMVLKDVIVNMTQKRKGPIPAQFEITPILRFNFIFDLTATNSFH.

Residues 14–165 enclose the Resolvase/invertase-type recombinase catalytic domain; sequence NILGYLRRSR…GAKYTYAAQG (152 aa). Residues 19 to 46 adopt a coiled-coil conformation; sequence LRRSRQDMEREKRTGEDTLTEQKELMNK. Ser22 serves as the catalytic O-(5'-phospho-DNA)-serine intermediate. Positions 173–303 form a DNA-binding region, recombinase; it reads PYGYQLNKKT…VKIANKVPLL (131 aa). The stretch at 402–475 forms a coiled coil; sequence NMKTKKQMSE…QDTQSEIDSN (74 aa).

It in the N-terminal section; belongs to the site-specific recombinase resolvase family.

The protein is Resolvase homolog YokA (yokA) of Bacillus subtilis (strain 168).